A 1023-amino-acid chain; its full sequence is 2-oxoglutarate dehydrogenase complex component E1 (1023 aa).

A mitochondrion-targeting transit peptide spans 1-40 (MFHLRTCAAKLRPLTASQTVKTFSQNRPAAARTFQQIRCY). At Lys-74 the chain carries N6-succinyllysine. Ser-100 carries the phosphoserine modification. Positions 143, 156, and 158 each coordinate Ca(2+). Arg-312 serves as a coordination point for thiamine diphosphate. At Lys-401 the chain carries N6-acetyllysine. Positions 411, 444, and 446 each coordinate thiamine diphosphate. Residues Asp-411, Asn-444, and Ile-446 each coordinate Mg(2+). Residue Lys-534 forms a Glycyl lysine isopeptide (Lys-Gly) (interchain with G-Cter in ubiquitin) linkage. Lys-564 is modified (N6-succinyllysine). Gln-676 lines the thiamine diphosphate pocket. The residue at position 970 (Lys-970) is an N6-acetyllysine.

The protein belongs to the alpha-ketoglutarate dehydrogenase family. As to quaternary structure, homodimer. The 2-oxoglutarate dehydrogenase complex is composed of OGDH (2-oxoglutarate dehydrogenase; E1), DLST (dihydrolipoamide succinyltransferase; E2), DLD (dihydrolipoamide dehydrogenase; E3) and the assembly factor KGD4. It contains multiple copies of the three enzymatic components (E1, E2 and E3). In the nucleus, the 2-oxoglutarate dehydrogenase complex associates with KAT2A. Interacts with ABHD11; this interaction maintains the functional lipoylation of the 2-oxoglutarate dehydrogenase complex. Thiamine diphosphate serves as cofactor. The cofactor is Mg(2+).

It localises to the mitochondrion. Its subcellular location is the nucleus. It catalyses the reaction N(6)-[(R)-lipoyl]-L-lysyl-[protein] + 2-oxoglutarate + H(+) = N(6)-[(R)-S(8)-succinyldihydrolipoyl]-L-lysyl-[protein] + CO2. Its activity is regulated as follows. Calcium ions and ADP stimulate, whereas ATP and NADH reduce catalytic activity. Functionally, 2-oxoglutarate dehydrogenase (E1o) component of the 2-oxoglutarate dehydrogenase complex (OGDHC). Participates in the first step, rate limiting for the overall conversion of 2-oxoglutarate to succinyl-CoA and CO(2) catalyzed by the whole OGDHC. Catalyzes the irreversible decarboxylation of 2-oxoglutarate (alpha-ketoglutarate) via the thiamine diphosphate (ThDP) cofactor and subsequent transfer of the decarboxylated acyl intermediate on an oxidized dihydrolipoyl group that is covalently amidated to the E2 enzyme (dihydrolipoyllysine-residue succinyltransferase or DLST). Plays a key role in the Krebs (citric acid) cycle, which is a common pathway for oxidation of fuel molecules, including carbohydrates, fatty acids, and amino acids. Can catalyze the decarboxylation of 2-oxoadipate in vitro, but at a much lower rate than 2-oxoglutarate. Mainly active in the mitochondrion. A fraction of the 2-oxoglutarate dehydrogenase complex also localizes in the nucleus and is required for lysine succinylation of histones: associates with KAT2A on chromatin and provides succinyl-CoA to histone succinyltransferase KAT2A. The chain is 2-oxoglutarate dehydrogenase complex component E1 from Macaca fascicularis (Crab-eating macaque).